The chain runs to 514 residues: Membrane-bound lytic murein transglycosylase F (514 aa).

Positions 1 to 30 (MKKLKINYLFIGILTLLLAAALWPSIPWFG) are cleaved as a signal peptide. The segment at 31 to 269 (KTENHIAAIQ…RIEEKYLGHG (239 aa)) is non-LT domain. Positions 270-514 (DDFDYVDTRS…LFTPQKKEEK (245 aa)) are LT domain. The active site involves glutamate 314.

In the N-terminal section; belongs to the bacterial solute-binding protein 3 family. It in the C-terminal section; belongs to the transglycosylase Slt family.

The protein resides in the cell outer membrane. The enzyme catalyses Exolytic cleavage of the (1-&gt;4)-beta-glycosidic linkage between N-acetylmuramic acid (MurNAc) and N-acetylglucosamine (GlcNAc) residues in peptidoglycan, from either the reducing or the non-reducing ends of the peptidoglycan chains, with concomitant formation of a 1,6-anhydrobond in the MurNAc residue.. In terms of biological role, murein-degrading enzyme that degrades murein glycan strands and insoluble, high-molecular weight murein sacculi, with the concomitant formation of a 1,6-anhydromuramoyl product. Lytic transglycosylases (LTs) play an integral role in the metabolism of the peptidoglycan (PG) sacculus. Their lytic action creates space within the PG sacculus to allow for its expansion as well as for the insertion of various structures such as secretion systems and flagella. The sequence is that of Membrane-bound lytic murein transglycosylase F from Salmonella paratyphi A (strain ATCC 9150 / SARB42).